We begin with the raw amino-acid sequence, 95 residues long: Leukocyte-specific transcript 1 protein (95 aa).

The helical transmembrane segment at L22 to F42 threads the bilayer. S64 is modified (phosphoserine).

It belongs to the LST1 family. Expressed in spleen and at lower levels in thymus and liver.

Its subcellular location is the membrane. Possible role in modulating immune responses. Has an inhibitory effect on lymphocyte proliferation. Induces morphological changes including production of filopodia and microspikes when overexpressed in a variety of cell types and may be involved in dendritic cell maturation. The chain is Leukocyte-specific transcript 1 protein (Lst1) from Mus musculus (Mouse).